A 167-amino-acid chain; its full sequence is Endoribonuclease YbeY (167 aa).

Residues His-132, His-136, and His-142 each coordinate Zn(2+).

Belongs to the endoribonuclease YbeY family. Zn(2+) serves as cofactor.

It localises to the cytoplasm. Single strand-specific metallo-endoribonuclease involved in late-stage 70S ribosome quality control and in maturation of the 3' terminus of the 16S rRNA. This Clostridium tetani (strain Massachusetts / E88) protein is Endoribonuclease YbeY.